The primary structure comprises 273 residues: Large ribosomal subunit protein uL2cz/uL2cy (273 aa).

The segment at 224 to 273 (NPVDHPHGGGEGRAPIGRKKPATPWGYPALGRRSRKRNKYSDRFILRRRK) is disordered. Over residues 262-273 (KYSDRFILRRRK) the composition is skewed to basic and acidic residues.

This sequence belongs to the universal ribosomal protein uL2 family. In terms of assembly, part of the 50S ribosomal subunit.

The protein localises to the plastid. It is found in the chloroplast. This chain is Large ribosomal subunit protein uL2cz/uL2cy (rpl2-A), found in Piper cenocladum (Ant piper).